The primary structure comprises 758 residues: MFEIIKKSIDWEGRTLSLETGKIARQADGSVVVNYGDTSILVTVVRKKKEESVDFLPLNVQFIAKSYAMGKIPGGFFKREGKPSDRETLISRVIDRSIRPLFPEGFHDEISVVCNLLTYDTVNSPEVPALIGTVAALAISGVPFHFTIAGVMVGCDENNNYILNPSVQEMKASNLDLFLSGDENSILMVESEVKELSEENVLNAIKFGHEHLQPVIKLIKEFADTVGNKPESFAPVDISDITQELEKYRKDFEEAYSKTVKQERVQALEVVRNNILNTLKEAGKDEKLITYAVKSFERSLVREMIRRKSVRIDSRKYDEIRQIEIEADILPKTHGSALFTRGSTQALVVTALGTTQDEQIVDDIEGDRREHFMLHYNFPPFAVGEASAIRAPGRREIGHGKLAWKAIHPVLPDKSEFPYTIRVVSEIMESDGSSSMATVCGTSIALMDTGVPIKAPVAGIAMGLIKDKNEHIILSDILGDEDYLGDMDFKVAGTSEGITALQMDMKIPGISFEIVEKSLEQAKVGRLHILEKMNAVISEHRKDIKDHVPRVLSFYIDKDKISAAIGTKGKNIRSVCERSNAKIEIGDDGKVSVFAISSTEAEAAKNMMIDSITELEQGSIIDAKVVKIEKSIVELELLNGRKGKMHISEVANQHVESIEDILKQGDTFKALIIDFEKGGCPKLSRRRVDQETGEFFEGKLYNEERRDGLNNRDNYYNNSFNKKPEDNYHSNRPTRPRSGFSNRSRPKFGNNDSSSGFY.

Mg(2+) is bound by residues Asp-482 and Asp-488. In terms of domain architecture, KH spans 549-608 (PRVLSFYIDKDKISAAIGTKGKNIRSVCERSNAKIEIGDDGKVSVFAISSTEAEAAKNMM). The S1 motif domain maps to 618 to 686 (GSIIDAKVVK…KGGCPKLSRR (69 aa)). The disordered stretch occupies residues 707–758 (DGLNNRDNYYNNSFNKKPEDNYHSNRPTRPRSGFSNRSRPKFGNNDSSSGFY). Positions 711–721 (NRDNYYNNSFN) are enriched in low complexity.

The protein belongs to the polyribonucleotide nucleotidyltransferase family. Requires Mg(2+) as cofactor.

It is found in the cytoplasm. It catalyses the reaction RNA(n+1) + phosphate = RNA(n) + a ribonucleoside 5'-diphosphate. Its function is as follows. Involved in mRNA degradation. Catalyzes the phosphorolysis of single-stranded polyribonucleotides processively in the 3'- to 5'-direction. The sequence is that of Polyribonucleotide nucleotidyltransferase from Wolbachia pipientis subsp. Culex pipiens (strain wPip).